The primary structure comprises 148 residues: SPbeta prophage-derived disulfide bond formation protein B (148 aa).

The chain crosses the membrane as a helical span at residues 7–26 (KSFFLLLFFLSFFGTMASLF). Residues C36 and C39 are joined by a disulfide bond. Transmembrane regions (helical) follow at residues 41 to 60 (YQRI…LLKK) and 67 to 84 (YVVF…YHYI). A disulfide bridge connects residues C95 and C102. The chain crosses the membrane as a helical span at residues 111–135 (GFITLPLMSSVCFALIFGIGLKLII).

It belongs to the DsbB family. BdbC subfamily.

It localises to the cell membrane. Its function is as follows. Important but not absolutely essential for the production of the lantibiotic sublancin 168, it may also be required for the stability of other secreted proteins. Not required for competence for DNA uptake. The protein is SPbeta prophage-derived disulfide bond formation protein B (bdbB) of Bacillus subtilis (strain 168).